A 492-amino-acid chain; its full sequence is Tyrosinase-like protein 1 (492 aa).

A signal peptide spans 1 to 22 (MDKMRTLQSLIVKLTLLYGALC). Cu cation-binding residues include His-147, His-155, His-164, His-289, His-293, and His-316. Residues 472–492 (SEPPLQLEGPSFTSSFDDPRI) form a disordered region. Over residues 482 to 492 (SFTSSFDDPRI) the composition is skewed to polar residues.

Cu(2+) serves as cofactor. As to expression, prismatic layer of shell (at protein level). Expressed primarily in the mantle with highest level in the mantle edge and lower level in the mantle pallium.

The protein localises to the secreted. This is Tyrosinase-like protein 1 from Margaritifera margaritifera (Freshwater pearl mussel).